The following is a 215-amino-acid chain: Adenylyl-sulfate kinase (215 aa).

46-53 (GLSGAGKS) contributes to the ATP binding site. Catalysis depends on Ser120, which acts as the Phosphoserine intermediate.

Belongs to the APS kinase family.

The enzyme catalyses adenosine 5'-phosphosulfate + ATP = 3'-phosphoadenylyl sulfate + ADP + H(+). The protein operates within sulfur metabolism; hydrogen sulfide biosynthesis; sulfite from sulfate: step 2/3. Catalyzes the synthesis of activated sulfate. The protein is Adenylyl-sulfate kinase (cysC) of Vibrio cholerae serotype O1 (strain ATCC 39315 / El Tor Inaba N16961).